A 473-amino-acid polypeptide reads, in one-letter code: Azaphilone pigments biosynthesis cluster protein L (473 aa).

A signal peptide spans 1 to 23; the sequence is MAELSIASGIVGLLSLGIQVTQS. ANK repeat units lie at residues 403-432 and 436-465; these read EYGNALQAASSGGHWKVVQMLLDQGADVNA and RYGNALHAASSRGHKKVVQMLLDHGANVST. N462 is a glycosylation site (N-linked (GlcNAc...) asparagine).

Functionally, part of the gene cluster that mediates the biosynthesis of azaphilone pigments (MonAzPs), a complex mixture of compounds with a common azaphilone skeleton very widely used as food colorants. Seems not to play a direct role in the biosynthesis but might have a regulatorx function. This chain is Azaphilone pigments biosynthesis cluster protein L, found in Monascus ruber (Mold).